Reading from the N-terminus, the 300-residue chain is Ribosomal protein L11 methyltransferase (300 aa).

The S-adenosyl-L-methionine site is built by Thr-147, Gly-168, Asp-190, and Asn-236.

It belongs to the methyltransferase superfamily. PrmA family.

Its subcellular location is the cytoplasm. It carries out the reaction L-lysyl-[protein] + 3 S-adenosyl-L-methionine = N(6),N(6),N(6)-trimethyl-L-lysyl-[protein] + 3 S-adenosyl-L-homocysteine + 3 H(+). In terms of biological role, methylates ribosomal protein L11. This chain is Ribosomal protein L11 methyltransferase, found in Leptospira interrogans serogroup Icterohaemorrhagiae serovar Lai (strain 56601).